The following is a 911-amino-acid chain: Valine--tRNA ligase (911 aa).

The short motif at 57-67 (PTVSGSLHVGH) is the 'HIGH' region element. A 'KMSKS' region motif is present at residues 599–603 (KMSKS). K602 contacts ATP. The segment at 882–911 (EESAAEGTPETEVAVEASELGEPPAKKPKH) is disordered.

The protein belongs to the class-I aminoacyl-tRNA synthetase family. ValS type 2 subfamily. As to quaternary structure, monomer.

Its subcellular location is the cytoplasm. The catalysed reaction is tRNA(Val) + L-valine + ATP = L-valyl-tRNA(Val) + AMP + diphosphate. In terms of biological role, catalyzes the attachment of valine to tRNA(Val). As ValRS can inadvertently accommodate and process structurally similar amino acids such as threonine, to avoid such errors, it has a 'posttransfer' editing activity that hydrolyzes mischarged Thr-tRNA(Val) in a tRNA-dependent manner. The chain is Valine--tRNA ligase from Bifidobacterium longum (strain NCC 2705).